A 704-amino-acid chain; its full sequence is Ion-translocating oxidoreductase complex subunit C (704 aa).

4Fe-4S ferredoxin-type domains are found at residues 368 to 397 (MGAP…QQLY) and 407 to 436 (KATA…VQYF). [4Fe-4S] cluster contacts are provided by C377, C380, C383, C387, C416, C419, C422, and C426. Residues 536–685 (RAKQAAHPMA…ADPRKAAVAA (150 aa)) are disordered. Positions 556–565 (KAAVEAAIAR) are enriched in low complexity.

The protein belongs to the 4Fe4S bacterial-type ferredoxin family. RnfC subfamily. The complex is composed of six subunits: RsxA, RsxB, RsxC, RsxD, RsxE and RsxG. The cofactor is [4Fe-4S] cluster.

The protein localises to the cell inner membrane. Its function is as follows. Part of a membrane-bound complex that couples electron transfer with translocation of ions across the membrane. Required to maintain the reduced state of SoxR. The chain is Ion-translocating oxidoreductase complex subunit C from Salmonella dublin (strain CT_02021853).